The primary structure comprises 559 residues: Formate--tetrahydrofolate ligase (559 aa).

68–75 (TPAGEGKT) contributes to the ATP binding site.

The protein belongs to the formate--tetrahydrofolate ligase family.

It catalyses the reaction (6S)-5,6,7,8-tetrahydrofolate + formate + ATP = (6R)-10-formyltetrahydrofolate + ADP + phosphate. The protein operates within one-carbon metabolism; tetrahydrofolate interconversion. The protein is Formate--tetrahydrofolate ligase of Rhizobium johnstonii (strain DSM 114642 / LMG 32736 / 3841) (Rhizobium leguminosarum bv. viciae).